Here is a 160-residue protein sequence, read N- to C-terminus: Putative pre-16S rRNA nuclease (160 aa).

This sequence belongs to the YqgF nuclease family.

It is found in the cytoplasm. Its function is as follows. Could be a nuclease involved in processing of the 5'-end of pre-16S rRNA. The sequence is that of Putative pre-16S rRNA nuclease from Rhodopseudomonas palustris (strain HaA2).